Reading from the N-terminus, the 173-residue chain is Peptidyl-prolyl cis-trans isomerase cyp3 (173 aa).

Residues 8–172 enclose the PPIase cyclophilin-type domain; that stretch reads FMDIAIDGRL…SNVAIVECGE (165 aa).

Belongs to the cyclophilin-type PPIase family. PPIase H subfamily.

It is found in the cytoplasm. It localises to the cytoskeleton. The protein localises to the microtubule organizing center. The protein resides in the spindle pole body. It catalyses the reaction [protein]-peptidylproline (omega=180) = [protein]-peptidylproline (omega=0). PPIases accelerate the folding of proteins. It catalyzes the cis-trans isomerization of proline imidic peptide bonds in oligopeptides. This Schizosaccharomyces pombe (strain 972 / ATCC 24843) (Fission yeast) protein is Peptidyl-prolyl cis-trans isomerase cyp3 (cyp3).